The following is a 494-amino-acid chain: Rho GTPase-activating protein 19 (494 aa).

An N-acetylalanine modification is found at Ala2. A phosphoserine mark is found at Ser7 and Ser31. A Rho-GAP domain is found at 102–308 (MSLKRKEKGV…FMIKHSQKLF (207 aa)). 2 disordered regions span residues 349–368 (KSQKRNRVDSCPHQEETQHH) and 399–421 (QSLTQTPGREPSTSQVQKRARSR). Over residues 354–368 (NRVDSCPHQEETQHH) the composition is skewed to basic and acidic residues. Residues 399–415 (QSLTQTPGREPSTSQVQ) show a composition bias toward polar residues. A phosphoserine mark is found at Ser422, Ser438, and Ser470. Position 478 is a phosphothreonine (Thr478).

As to expression, strong expression in fetal heart, brain, placenta, lung, liver, skeletal muscle, kidney and pancreas. Weak expression in adult pancreas, spleen, thymus, and ovary.

The protein localises to the nucleus. Functionally, GTPase activator for the Rho-type GTPases by converting them to an inactive GDP-bound state. In Homo sapiens (Human), this protein is Rho GTPase-activating protein 19 (ARHGAP19).